A 332-amino-acid polypeptide reads, in one-letter code: Tryptophan--tRNA ligase (332 aa).

Residues 11 to 13 (QPS) and 19 to 20 (GN) each bind ATP. The 'HIGH' region signature appears at 12-20 (PSGELTIGN). L-tryptophan is bound at residue aspartate 135. ATP contacts are provided by residues 147 to 149 (GQD), valine 186, and 195 to 199 (KMSKS). The short motif at 195-199 (KMSKS) is the 'KMSKS' region element.

It belongs to the class-I aminoacyl-tRNA synthetase family. Homodimer.

Its subcellular location is the cytoplasm. The enzyme catalyses tRNA(Trp) + L-tryptophan + ATP = L-tryptophyl-tRNA(Trp) + AMP + diphosphate + H(+). Functionally, catalyzes the attachment of tryptophan to tRNA(Trp). The sequence is that of Tryptophan--tRNA ligase from Shewanella oneidensis (strain ATCC 700550 / JCM 31522 / CIP 106686 / LMG 19005 / NCIMB 14063 / MR-1).